The primary structure comprises 215 residues: Urease accessory protein UreG 2 (215 aa).

11–18 (GPVGSGKT) contacts GTP.

The protein belongs to the SIMIBI class G3E GTPase family. UreG subfamily. Homodimer. UreD, UreF and UreG form a complex that acts as a GTP-hydrolysis-dependent molecular chaperone, activating the urease apoprotein by helping to assemble the nickel containing metallocenter of UreC. The UreE protein probably delivers the nickel.

The protein localises to the cytoplasm. Its function is as follows. Facilitates the functional incorporation of the urease nickel metallocenter. This process requires GTP hydrolysis, probably effectuated by UreG. This chain is Urease accessory protein UreG 2, found in Methylorubrum populi (strain ATCC BAA-705 / NCIMB 13946 / BJ001) (Methylobacterium populi).